The following is a 99-amino-acid chain: Integration host factor subunit beta (99 aa).

The protein belongs to the bacterial histone-like protein family. As to quaternary structure, heterodimer of an alpha and a beta chain.

Functionally, this protein is one of the two subunits of integration host factor, a specific DNA-binding protein that functions in genetic recombination as well as in transcriptional and translational control. The polypeptide is Integration host factor subunit beta (Laribacter hongkongensis (strain HLHK9)).